The chain runs to 116 residues: NADH-ubiquinone oxidoreductase chain 3 (116 aa).

The next 3 membrane-spanning stretches (helical) occupy residues 3–23, 56–76, and 84–104; these read LVTT…TISF, FFLI…LLPL, and APTL…LGLI.

The protein belongs to the complex I subunit 3 family.

Its subcellular location is the mitochondrion membrane. It catalyses the reaction a ubiquinone + NADH + 5 H(+)(in) = a ubiquinol + NAD(+) + 4 H(+)(out). Its function is as follows. Core subunit of the mitochondrial membrane respiratory chain NADH dehydrogenase (Complex I) that is believed to belong to the minimal assembly required for catalysis. Complex I functions in the transfer of electrons from NADH to the respiratory chain. The immediate electron acceptor for the enzyme is believed to be ubiquinone. The chain is NADH-ubiquinone oxidoreductase chain 3 (MT-ND3) from Oncorhynchus nerka (Sockeye salmon).